Here is a 353-residue protein sequence, read N- to C-terminus: Photosystem II protein D1 (353 aa).

Residue threonine 2 is modified to N-acetylthreonine. Position 2 is a phosphothreonine (threonine 2). Transmembrane regions (helical) follow at residues 29–46 (YIGWFGVLMIPTLLTATS), 118–133 (HFLLGVACYMGREWEL), and 142–156 (WIAVAYSAPVAAATA). Histidine 118 lines the chlorophyll a pocket. Residue tyrosine 126 coordinates pheophytin a. [CaMn4O5] cluster is bound by residues aspartate 170 and glutamate 189. Residues 197–218 (FHMLGVAGVFGGSLFSAMHGSL) form a helical membrane-spanning segment. Histidine 198 contacts chlorophyll a. A quinone is bound by residues histidine 215 and 264–265 (SF). Position 215 (histidine 215) interacts with Fe cation. Histidine 272 is a Fe cation binding site. Residues 274 to 288 (FLAAWPVVGIWFTAL) form a helical membrane-spanning segment. The [CaMn4O5] cluster site is built by histidine 332, glutamate 333, aspartate 342, and alanine 344. A propeptide spanning residues 345-353 (AIEAPATNG) is cleaved from the precursor.

It belongs to the reaction center PufL/M/PsbA/D family. As to quaternary structure, PSII is composed of 1 copy each of membrane proteins PsbA, PsbB, PsbC, PsbD, PsbE, PsbF, PsbH, PsbI, PsbJ, PsbK, PsbL, PsbM, PsbT, PsbX, PsbY, PsbZ, Psb30/Ycf12, at least 3 peripheral proteins of the oxygen-evolving complex and a large number of cofactors. It forms dimeric complexes. The D1/D2 heterodimer binds P680, chlorophylls that are the primary electron donor of PSII, and subsequent electron acceptors. It shares a non-heme iron and each subunit binds pheophytin, quinone, additional chlorophylls, carotenoids and lipids. D1 provides most of the ligands for the Mn4-Ca-O5 cluster of the oxygen-evolving complex (OEC). There is also a Cl(-1) ion associated with D1 and D2, which is required for oxygen evolution. The PSII complex binds additional chlorophylls, carotenoids and specific lipids. serves as cofactor. Post-translationally, tyr-161 forms a radical intermediate that is referred to as redox-active TyrZ, YZ or Y-Z. In terms of processing, C-terminally processed by CTPA; processing is essential to allow assembly of the oxygen-evolving complex and thus photosynthetic growth.

The protein resides in the plastid membrane. It catalyses the reaction 2 a plastoquinone + 4 hnu + 2 H2O = 2 a plastoquinol + O2. In terms of biological role, photosystem II (PSII) is a light-driven water:plastoquinone oxidoreductase that uses light energy to abstract electrons from H(2)O, generating O(2) and a proton gradient subsequently used for ATP formation. It consists of a core antenna complex that captures photons, and an electron transfer chain that converts photonic excitation into a charge separation. The D1/D2 (PsbA/PsbD) reaction center heterodimer binds P680, the primary electron donor of PSII as well as several subsequent electron acceptors. The sequence is that of Photosystem II protein D1 from Cuscuta reflexa (Southern Asian dodder).